The following is a 122-amino-acid chain: Small ribosomal subunit protein uS13 (122 aa).

The tract at residues 97–122 (PVRGQRTHTNAKTRKGRSKLPIAGKK) is disordered.

The protein belongs to the universal ribosomal protein uS13 family. In terms of assembly, part of the 30S ribosomal subunit. Forms a loose heterodimer with protein S19. Forms two bridges to the 50S subunit in the 70S ribosome.

Its function is as follows. Located at the top of the head of the 30S subunit, it contacts several helices of the 16S rRNA. In the 70S ribosome it contacts the 23S rRNA (bridge B1a) and protein L5 of the 50S subunit (bridge B1b), connecting the 2 subunits; these bridges are implicated in subunit movement. Contacts the tRNAs in the A and P-sites. The chain is Small ribosomal subunit protein uS13 from Wolbachia pipientis subsp. Culex pipiens (strain wPip).